Reading from the N-terminus, the 588-residue chain is MPSIADQLSAVLGDAFASLELPRELGRVSPSKQKPEVFPFQCNGAMPAAKQAKTNPRELAAKLIEALHGIPQIGAAEIAGPGFINLRPAEHLYGERAAEIAGDDRAGAPLAAAPRTVMIDFGGPNVAKPMHVGHLRSSVLGDSLQRLFRFRGDTVVSDIHLGDWGLQMGHLITELHEEQPDLVYFDAAITDGYPSEPPVTIEDLARLYPQASVKAKAGPERLEISRSATAELQAGRPGYRALLRHFIDVSVAALKRDFGALGVHFDLWKGESDVDPLIPGLVEDFKARGVAEESEGALIVRVARDGDKKELAPLILVSKTGAALYGTTDLATILDRKQSVDPDLTLYVVDLAQGDHFEQVFRAAEKAGLAEEGALEHVKFGTVNGTDGKRLRTRDGGTFRLADLIASAIERADERLKEAGLAADVSAEEHARVARMVGLAAIKFADLQNYRTTNYVFDLDRFTSFEGKTGPYLLYAAVRVKSLMRRAAEAGVTPGEILVDAQEERDLVLCLDAFGAALDNAADNRAPNALCDHAFTLAQAFSKFYSACPVLVAEDDAVKASRLALAEATLKQLELCLGLLGLEAPERM.

The 'HIGH' region motif lies at 124-134 (PNVAKPMHVGH).

It belongs to the class-I aminoacyl-tRNA synthetase family. Monomer.

It is found in the cytoplasm. The enzyme catalyses tRNA(Arg) + L-arginine + ATP = L-arginyl-tRNA(Arg) + AMP + diphosphate. This chain is Arginine--tRNA ligase, found in Maricaulis maris (strain MCS10) (Caulobacter maris).